The primary structure comprises 834 residues: Periplasmic nitrate reductase (834 aa).

Positions 1-29 (MNLTRREFAKANAAAIAAAAAGLPILVRA) form a signal peptide, tat-type signal. The 4Fe-4S Mo/W bis-MGD-type domain maps to 41–97 (LDWNKAPCRFCGTGCSVMVATRDGQVVATHGDIKAEVNRGINCVKGYFLSKIMYGSD). C48, C51, C55, and C83 together coordinate [4Fe-4S] cluster. Residues K85, Q152, N177, C181, 214-221 (WGSNMAEM), 245-249 (STFEH), 264-266 (QTD), M375, Q379, N485, 511-512 (SD), K534, D561, and 721-730 (TGRVLEHWHT) contribute to the Mo-bis(molybdopterin guanine dinucleotide) site. Residue F797 participates in substrate binding. N805 and K822 together coordinate Mo-bis(molybdopterin guanine dinucleotide).

The protein belongs to the prokaryotic molybdopterin-containing oxidoreductase family. NasA/NapA/NarB subfamily. As to quaternary structure, component of the periplasmic nitrate reductase NapAB complex composed of NapA and NapB. The cofactor is [4Fe-4S] cluster. Requires Mo-bis(molybdopterin guanine dinucleotide) as cofactor. Predicted to be exported by the Tat system. The position of the signal peptide cleavage has not been experimentally proven.

The protein localises to the periplasm. The enzyme catalyses 2 Fe(II)-[cytochrome] + nitrate + 2 H(+) = 2 Fe(III)-[cytochrome] + nitrite + H2O. In terms of biological role, catalytic subunit of the periplasmic nitrate reductase complex NapAB. Receives electrons from NapB and catalyzes the reduction of nitrate to nitrite. The protein is Periplasmic nitrate reductase of Pseudomonas paraeruginosa (strain DSM 24068 / PA7) (Pseudomonas aeruginosa (strain PA7)).